The following is a 185-amino-acid chain: Neuronal vesicle trafficking-associated protein 1 (185 aa).

At 1–82 (MVKLGNNFSE…ITEGVSERFK (82 aa)) the chain is on the cytoplasmic side. Residues 83–103 (VTVLVLFALAFLTCVVFLVVY) form a helical; Signal-anchor for type II membrane protein membrane-spanning segment. The Lumenal portion of the chain corresponds to 104-185 (KVYKYDHTCP…QETEAAEKSA (82 aa)).

Belongs to the NSG family.

The protein resides in the membrane. It localises to the golgi apparatus. It is found in the trans-Golgi network membrane. Its subcellular location is the endosome membrane. The protein localises to the cell projection. The protein resides in the dendrite. It localises to the early endosome membrane. It is found in the late endosome membrane. Its subcellular location is the lysosome lumen. The protein localises to the recycling endosome membrane. The protein resides in the cytoplasmic vesicle membrane. It localises to the golgi stack membrane. It is found in the endosome. Its subcellular location is the multivesicular body membrane. Plays a role in the recycling mechanism in neurons of multiple receptors and acts at the level of early endosomes to promote sorting of receptors toward a recycling pathway. The polypeptide is Neuronal vesicle trafficking-associated protein 1 (Gallus gallus (Chicken)).